A 166-amino-acid polypeptide reads, in one-letter code: PR-toxin biosynthesis cluster protein 10 (166 aa).

Part of the gene cluster that mediates the biosynthesis of PR-toxin, a bicyclic sesquiterpene belonging to the eremophilane class and acting as a mycotoxin. The first step of the pathway is catalyzed by the aristolochene synthase which performs the cyclization of trans,trans-farnesyl diphosphate (FPP) to the bicyclic sesquiterpene aristolochene. Following the formation of aristolochene, the non-oxygenated aristolochene is converted to the trioxygenated intermediate eremofortin B, via 7-epi-neopetasone. This conversion appears to involve three enzymes, a hydroxysterol oxidase-like enzyme, the quinone-oxidase prx3 that forms the quinone-type-structure in the bicyclic nucleus of aristolochene with the C8-oxo group and the C-3 hydroxyl group, and the P450 monooxygenase prx9 that introduces the epoxide at the double bond between carbons 1 and 2. No monoxy or dioxy-intermediates have been reported to be released to the broth, so these three early oxidative reactions may be coupled together. Eremofortin B is further oxidized by another P450 monooxygenase, that introduces a second epoxide between carbons 7 and 11 prior to acetylation to eremofortin A by the acetyltransferase prx11. The second epoxidation may be performed by a second P450 monooxygenase. After the acetylation step, eremofortin A is converted to eremofortin C and then to PR-toxin. First the conversion of eremofortin A to eremofortin C proceeds by oxidation of the side chain of the molecule at C-12 and is catalyzed by the short-chain oxidoreductase prx1. The cytochrome P450 monooxygenase prx8 also plays a role in this step. The primary alcohol formed at C-12 is finally oxidized by the short-chain alcohol dehydrogenase prx4 that forms PR-toxin. The polypeptide is PR-toxin biosynthesis cluster protein 10 (Penicillium rubens (strain ATCC 28089 / DSM 1075 / NRRL 1951 / Wisconsin 54-1255) (Penicillium chrysogenum)).